The sequence spans 349 residues: Probable inactive tRNA-specific adenosine deaminase-like protein 3 (349 aa).

At Met1 the chain carries N-acetylmethionine. The disordered stretch occupies residues 1-25 (MEPTSGFAEQPGPVKAESEEQEPAQ). The region spanning 171-334 (AAMQTHMERA…PDLNHRFQVF (164 aa)) is the CMP/dCMP-type deaminase domain. The Zn(2+) site is built by His223, Cys289, and Cys292.

Belongs to the cytidine and deoxycytidylate deaminase family. ADAT3 subfamily. Zn(2+) is required as a cofactor.

This chain is Probable inactive tRNA-specific adenosine deaminase-like protein 3 (Adat3), found in Mus musculus (Mouse).